Here is a 274-residue protein sequence, read N- to C-terminus: Acetylaranotin bis-thiomethyltransferase (274 aa).

Belongs to the class I-like SAM-binding methyltransferase superfamily.

It participates in mycotoxin biosynthesis. Its function is as follows. Acetylaranotin bis-thiomethyltransferase involved in the biosynthesis of acetylaranotin derivatives, members of the epipolythiodioxopiperazine (ETP) class of toxins characterized by a disulfide-bridged cyclic dipeptide. The first step of acetylaranotin biosynthesis is performed by the NRPS ataP which produces diketopiperazine cyclo-L-Phe-L-Phe via the condensation of 2 phenylalanines (L-Phe). The ataC domain of ataTC then catalyzes the formation of bishydroxylation of cyclo-L-Phe-L-Phe. The glutathione S-transferase domain ataG in ataIMG further catalyzes the conjugation of two glutathiones to the bishydroxylated intermediate. Next, the dipeptidase ataJ removes the Glu residues. The following step is performed by the carbon sulfur lyase domain ataI of ataIMG which may convert the bis-cysteinyl adduct to yield an epidithiol intermediate. The ataT domain from ataTC then catalyzes the oxidation of the free dithiols, followed by a cyclization step catalyzed by the cytochrome P450 ataF. AtaF probably acts as an epoxidase to promote a dual epoxidation formation at C8 and C9 along with C8' and C9', followed by the spontaneous nucleophilic attack of the amide nitrogens N10 and N10' to yield an intermediate with the pyrrolidine partial structure. The final steps of acetylaranotin biosynthesis involve the acetylation and ring rearrangement of an epitetrathiodiketopiperazine intermediate to produce acetylaranotin. AtaH probably catalyzes the acetylation of epitetrathiodiketopiperazine to produce a diacetate and ataY is responsible for the formation of the dihydrooxepin moiety that converts the diacetate intermediate to acetylaranotin via acetylapoaranotin. Both enzymes could function independently in the absence of the other. The acetylaranotin bis-thiomethyltransferase ataS located outside of acetylaranotin gene cluster is the main thiomethyltransferase responsible for converting acetylaranotin and its related intermediates to their methylated forms. The polypeptide is Acetylaranotin bis-thiomethyltransferase (Aspergillus terreus (strain NIH 2624 / FGSC A1156)).